Consider the following 244-residue polypeptide: Probable ABC transporter ATP-binding protein p29 (244 aa).

The 236-residue stretch at 6-241 (LVFDQVSLRY…KLTKQKLMQI (236 aa)) folds into the ABC transporter domain. Position 38-45 (38-45 (GKSGVGKT)) interacts with ATP.

Belongs to the ABC transporter superfamily.

Part of a high-affinity transport system. This Mycoplasma pneumoniae (strain ATCC 29342 / M129 / Subtype 1) (Mycoplasmoides pneumoniae) protein is Probable ABC transporter ATP-binding protein p29 (p29).